The sequence spans 183 residues: Transmembrane protein 52B (183 aa).

Residues 1–24 (MGVRVHVVAASALLYFILLSGTRC) form the signal peptide. A helical transmembrane segment spans residues 40 to 60 (VHLWYIWLLVVIGALLLLCGL). The segment at 158–183 (DLPPVPEEKQLPPTEKESTRIVDSWN) is disordered. Basic and acidic residues predominate over residues 163 to 177 (PEEKQLPPTEKESTR).

Its subcellular location is the membrane. The protein is Transmembrane protein 52B (TMEM52B) of Homo sapiens (Human).